The chain runs to 101 residues: NAD(P)H-quinone oxidoreductase subunit 4L, chloroplastic (101 aa).

The next 3 membrane-spanning stretches (helical) occupy residues methionine 2–isoleucine 22, methionine 32–phenylalanine 52, and isoleucine 61–valine 81.

This sequence belongs to the complex I subunit 4L family. As to quaternary structure, NDH is composed of at least 16 different subunits, 5 of which are encoded in the nucleus.

It is found in the plastid. The protein resides in the chloroplast thylakoid membrane. It catalyses the reaction a plastoquinone + NADH + (n+1) H(+)(in) = a plastoquinol + NAD(+) + n H(+)(out). The enzyme catalyses a plastoquinone + NADPH + (n+1) H(+)(in) = a plastoquinol + NADP(+) + n H(+)(out). Functionally, NDH shuttles electrons from NAD(P)H:plastoquinone, via FMN and iron-sulfur (Fe-S) centers, to quinones in the photosynthetic chain and possibly in a chloroplast respiratory chain. The immediate electron acceptor for the enzyme in this species is believed to be plastoquinone. Couples the redox reaction to proton translocation, and thus conserves the redox energy in a proton gradient. This chain is NAD(P)H-quinone oxidoreductase subunit 4L, chloroplastic, found in Nandina domestica (Heavenly bamboo).